Reading from the N-terminus, the 520-residue chain is Anthranilate synthase component 1 (520 aa).

L-tryptophan contacts are provided by residues S40 and P291–M293. G328–T329 contributes to the chorismate binding site. E361 serves as a coordination point for Mg(2+). Residues Y449, R469, G483–G485, and G485 each bind chorismate. E498 contacts Mg(2+).

This sequence belongs to the anthranilate synthase component I family. In terms of assembly, heterotetramer consisting of two non-identical subunits: a beta subunit (TrpG) and a large alpha subunit (TrpE). Requires Mg(2+) as cofactor.

It catalyses the reaction chorismate + L-glutamine = anthranilate + pyruvate + L-glutamate + H(+). Its pathway is amino-acid biosynthesis; L-tryptophan biosynthesis; L-tryptophan from chorismate: step 1/5. Its activity is regulated as follows. Feedback inhibited by tryptophan. In terms of biological role, part of a heterotetrameric complex that catalyzes the two-step biosynthesis of anthranilate, an intermediate in the biosynthesis of L-tryptophan. In the first step, the glutamine-binding beta subunit (TrpG) of anthranilate synthase (AS) provides the glutamine amidotransferase activity which generates ammonia as a substrate that, along with chorismate, is used in the second step, catalyzed by the large alpha subunit of AS (TrpE) to produce anthranilate. In the absence of TrpG, TrpE can synthesize anthranilate directly from chorismate and high concentrations of ammonia. This is Anthranilate synthase component 1 (trpE) from Buchnera aphidicola subsp. Pemphigus spyrothecae.